Here is a 292-residue protein sequence, read N- to C-terminus: 33 kDa chaperonin (292 aa).

Disulfide bonds link Cys-230/Cys-232 and Cys-263/Cys-266.

Belongs to the HSP33 family. Under oxidizing conditions two disulfide bonds are formed involving the reactive cysteines. Under reducing conditions zinc is bound to the reactive cysteines and the protein is inactive.

The protein resides in the cytoplasm. In terms of biological role, redox regulated molecular chaperone. Protects both thermally unfolding and oxidatively damaged proteins from irreversible aggregation. Plays an important role in the bacterial defense system toward oxidative stress. The protein is 33 kDa chaperonin of Salmonella paratyphi A (strain ATCC 9150 / SARB42).